We begin with the raw amino-acid sequence, 474 residues long: Polyamine oxidase 7 (474 aa).

A signal peptide spans Met1 to Gly27. Glu61 and Arg69 together coordinate FAD. 2 N-linked (GlcNAc...) asparagine glycosylation sites follow: Asn103 and Asn150. Val261 contacts FAD. An N-linked (GlcNAc...) asparagine glycan is attached at Asn278. FAD is bound at residue Glu454.

Belongs to the flavin monoamine oxidase family. FAD is required as a cofactor.

It localises to the secreted. It is found in the extracellular space. The protein resides in the apoplast. It catalyses the reaction spermine + O2 + H2O = 3-aminopropanal + spermidine + H2O2. The enzyme catalyses N(1)-acetylspermine + O2 + H2O = 3-acetamidopropanal + spermidine + H2O2. The catalysed reaction is norspermine + O2 + H2O = norspermidine + 3-aminopropanal + H2O2. It carries out the reaction spermidine + O2 + H2O = 3-aminopropanal + putrescine + H2O2. It catalyses the reaction N(1)-acetylspermidine + O2 + H2O = 3-acetamidopropanal + putrescine + H2O2. The enzyme catalyses thermospermine + O2 + H2O = 3-aminopropanal + spermidine + H2O2. It functions in the pathway amine and polyamine degradation; spermidine degradation. The protein operates within amine and polyamine degradation; spermine degradation. Flavoenzyme involved in polyamine back-conversion. Catalyzes the oxidation of the secondary amino group of polyamines, such as spermine, spermidine and their acetyl derivatives. Substrate preference is spermine &gt; spermidine &gt; N(1)-acetylspermine &gt; N(1)-acetylspermidine &gt; norspermine &gt; thermospermine. No activity detected when putrescine is used as substrate. May play a role in producing hydrogen peroxide for secondary wall thickening through lignin formation during anther development. The sequence is that of Polyamine oxidase 7 from Oryza sativa subsp. japonica (Rice).